We begin with the raw amino-acid sequence, 1467 residues long: MYSSSNSFLGGVNNARPGQPPFMQQPPYSQLPQGQQQIPQQTGFQPQPTGYGSQSASHLQPQPTGFPTGQLQPQFTGFPGAAPPQQQQQFGGYQAPAQQPQLTGYPPQSQPPSLQVPSTTGLPTRLAPRTSSEIANSFSDGAGVAPPPPPKSSGSKIPNIRLSFITAQDQAKFEQLFKSAVGDSQTMDGEKAKELLLRSRLPGSELSKIWVLSDTTKSGQLFFPEFALAMYLCNLRITGRELPSTLPDKIKNEVSGMVDIISFGVPDTEPQGAARTNVPSFDAPLLENKSAPPAPQHPKPQQPSNAQFLSQLAAQPTGFGPQATGLQPNQPSLLGANATLAPQTTGFPGQSQQQYLHSQPTGLMTNPQATGYNGPRPPLPPMPTGFGSNLSSMQTGGLAAQPTGIPGQWGFVNAPSSGLPNIEALKQQLMPQPGREGGFTTAGLSGNASIPWAITKEEKKIYDDLFRAWDGLHKGFIGGDTAIEIMGQSGLDRKDLERIWTLADPNNRGRLNMDEFAVAMHLIYRKLNGYPVPNRLPPELIPPSTRNLNDSIGAVKSLLSQDAESRKASGAFLQPQKTGVSYLKEHSFRGGARSPGFGRKDATLFKNNDEAAAGYRSSARRRVGNDARPSSPPTSQASEEELSVEQLKKKIRETQIMLDAVDFKDENRAEEDEVLDRRDRLEAESLMDRTRRVQDDIDTHPNAVFRKLDNGAERRSLRRQLQAFEDQVPQIASEVRRIEREIADAKLELFRLKDAKAHPNSAANIVGTGPGGTVTEADRIKARARARMQARAAELAGRPVPASVDDDGAAVRRLEAESASIRADREKNEAMTRDVEESVREFTRSLEDSLKEEGETSTREHERRRWEDALGVEDVIRDFIYDLQRGSRTAHIRKEEESRASAQEQRLRHEEPSPGVSRLSPAPSAGSAGSLPGSTHEDRVAAARERAQRRIAERMAAAGLKPHTDTSETLLQRQEREKREREERLRRAEEEDAKREQERQRRLAEEQRSTSDTPAKPVGKKPPPAPPSRRGRTDSAGQAEVKKAAEETITAEQAAREQAIREEQQAQEEETNRLEMEAQKREEELLKEKEAQEARLRALEEQVRQGKIRKQEEKRRKEEAERLAKEKEAALAAQRAEIERAKERERQLQLELERLDEESSSDDEGPVNITPEDSTPTQSQLLPTVTPAAPVSAPESEQAGSPEDTSSQAPPVDFKLETESKNPYFKITHQATDTQVVSSPPVPQPSFTSPKADVHSTNPFHRLAKQETSKPAFTGSAPLERKSRARPEADDDWSAAGSEFDSSDDDDDERPGGGSAKQLASILFGTMAPPRPLSAMDDKSPSKSSTPVQDSPVASLPVPESNGSLSAPAAPPPPPPPPPAAVPSYDPSVAPPPPPAPPMAPPAPPPGPPPPPGPPPPPAPPAASGPPTPAGAPDRSALLASIQKGKGLRKVQTNDRSTSSIAGRVLD.

The segment at 1–157 is disordered; the sequence is MYSSSNSFLG…PPPKSSGSKI (157 aa). A compositionally biased stretch (low complexity) spans 25-48; the sequence is QPPYSQLPQGQQQIPQQTGFQPQP. Positions 50-75 are enriched in polar residues; sequence GYGSQSASHLQPQPTGFPTGQLQPQF. Residues 77 to 101 are compositionally biased toward low complexity; it reads GFPGAAPPQQQQQFGGYQAPAQQPQ. Residues 129 to 139 are compositionally biased toward polar residues; sequence RTSSEIANSFS. One can recognise an EH 1 domain in the interval 169–257; the sequence is DQAKFEQLFK…DKIKNEVSGM (89 aa). The region spanning 201 to 236 is the EF-hand 1 domain; sequence LPGSELSKIWVLSDTTKSGQLFFPEFALAMYLCNLR. A disordered region spans residues 266–376; the sequence is PDTEPQGAAR…PQATGYNGPR (111 aa). The segment covering 292–301 has biased composition (pro residues); it reads PPAPQHPKPQ. 2 stretches are compositionally biased toward polar residues: residues 305–314 and 340–370; these read NAQFLSQLAA and LAPQ…PQAT. An EH 2 domain is found at 458-547; the sequence is EKKIYDDLFR…PELIPPSTRN (90 aa). Positions 491 to 526 constitute an EF-hand 2 domain; sequence LDRKDLERIWTLADPNNRGRLNMDEFAVAMHLIYRK. 4 disordered regions span residues 613-643, 822-864, 888-1087, and 1101-1467; these read AGYR…EELS, RADR…HERR, RTAH…ELLK, and EQVR…RVLD. Residues 634–758 adopt a coiled-coil conformation; sequence TSQASEEELS…LFRLKDAKAH (125 aa). Residues 892–912 are compositionally biased toward basic and acidic residues; sequence IRKEEESRASAQEQRLRHEEP. The segment covering 919–934 has biased composition (low complexity); that stretch reads LSPAPSAGSAGSLPGS. Composition is skewed to basic and acidic residues over residues 935–953, 973–1009, 1054–1087, 1101–1129, and 1136–1153; these read THED…RIAE, RQER…EQRS, AARE…ELLK, EQVR…EKEA, and AEIE…LELE. Positions 965-1162 form a coiled coil; sequence DTSETLLQRQ…ERLDEESSSD (198 aa). A compositionally biased stretch (acidic residues) spans 1154-1165; the sequence is RLDEESSSDDEG. A compositionally biased stretch (polar residues) spans 1171–1182; the sequence is PEDSTPTQSQLL. Positions 1183–1197 are enriched in low complexity; it reads PTVTPAAPVSAPESE. The span at 1279–1288 shows a compositional bias: basic and acidic residues; that stretch reads LERKSRARPE. Pro residues-rich tracts occupy residues 1369–1381 and 1389–1430; these read AAPP…PPAA and VAPP…PTPA. The 18-residue stretch at 1434-1451 folds into the WH2 domain; sequence DRSALLASIQKGKGLRKV.

The protein belongs to the PAN1 family. In terms of assembly, component of the PAN1 actin cytoskeleton-regulatory complex.

The protein localises to the cell membrane. It is found in the endosome membrane. The protein resides in the cytoplasm. Its subcellular location is the cytoskeleton. It localises to the actin patch. In terms of biological role, component of the PAN1 actin cytoskeleton-regulatory complex required for the internalization of endosomes during actin-coupled endocytosis. The complex links the site of endocytosis to the cell membrane-associated actin cytoskeleton. Mediates uptake of external molecules and vacuolar degradation of plasma membrane proteins. Plays a role in the proper organization of the cell membrane-associated actin cytoskeleton and promotes its destabilization. The sequence is that of Actin cytoskeleton-regulatory complex protein pan1 (pan1) from Aspergillus fumigatus (strain CBS 144.89 / FGSC A1163 / CEA10) (Neosartorya fumigata).